A 155-amino-acid chain; its full sequence is Small ribosomal subunit protein mS86 (155 aa).

The N-terminal 27 residues, 1 to 27 (MHYMGLFSRAGNIFRQPRALQASNAML), are a transit peptide targeting the mitochondrion. Positions 36–114 (SKIFVGGLSP…RIIGVHPADS (79 aa)) constitute an RRM domain.

It belongs to the GR-RBP family. Component of the mitochondrial ribosome small subunit.

It is found in the mitochondrion. In terms of biological role, possibly has a role in RNA transcription or processing during stress. In Arabidopsis thaliana (Mouse-ear cress), this protein is Small ribosomal subunit protein mS86 (RBG6).